We begin with the raw amino-acid sequence, 72 residues long: Beta-defensin 104A (72 aa).

The signal sequence occupies residues 1–22; sequence MRRLVLLLAISLLLYQDLPVRS. Disulfide bonds link cysteine 30–cysteine 57, cysteine 37–cysteine 51, and cysteine 41–cysteine 58.

This sequence belongs to the beta-defensin family.

It localises to the secreted. Functionally, has antimicrobial activity. The sequence is that of Beta-defensin 104A (DEFB104A) from Pongo pygmaeus (Bornean orangutan).